A 282-amino-acid polypeptide reads, in one-letter code: MTNFSSSPPIAFGDLQGCHAAYRQLFDTLAPAADTPLWFAGDLVNRGPASLATLREIAALGERAIAVLGNHDLHLLAVAAGIRTLKPGDTIGEILDAPDADDLIEWVRHRPFAHFERGMLMVHAGLLPQWDAALALELADELQRALRASNWRDTLRSLYGNDPNCWSPDLKHADRLRVAFNAFTRIRFCTPEGAMEFRANGGPAAAPAGYLPWFDAPGRKTADVTVVFGHWAALGLMLRENLVALDSGCVWGNRLSAVRLADDPAARVVTQVACERCGAADE.

Belongs to the Ap4A hydrolase family.

The enzyme catalyses P(1),P(4)-bis(5'-adenosyl) tetraphosphate + H2O = 2 ADP + 2 H(+). In terms of biological role, hydrolyzes diadenosine 5',5'''-P1,P4-tetraphosphate to yield ADP. The protein is Bis(5'-nucleosyl)-tetraphosphatase, symmetrical of Burkholderia mallei (strain NCTC 10247).